Here is a 788-residue protein sequence, read N- to C-terminus: Autophagy-related protein 9 (788 aa).

Over 1–171 the chain is Cytoplasmic; it reads MTDKSTFLSV…EAYMYYTGKG (171 aa). Residues 32–42 show a composition bias toward basic and acidic residues; it reads ILRRVEEEHAQ. Residues 32–127 form a disordered region; that stretch reads ILRRVEEEHA…TGVANGGLPR (96 aa). A compositionally biased stretch (low complexity) spans 44–58; it reads SDNSNSDNDSGNDSD. Polar residues predominate over residues 101 to 112; sequence SFAQGTKTQTPI. Residues 172–192 form a helical membrane-spanning segment; it reads LVSIILSRVLNMSTIMFVVVF. Topologically, residues 193–222 are lumenal; sequence STYLGSCIDYSKIKGSRTLDEVHVKQCYAK. Residues 223 to 243 traverse the membrane as a helical segment; it reads LGSFHVFVLWTFFVLWFMKLF. Over 244-390 the chain is Cytoplasmic; that stretch reads QYVKDIRRLV…QILSTGLRRR (147 aa). An intramembrane region is located at residue phenylalanine 391. Over 392-479 the chain is Cytoplasmic; that stretch reads VFAAIMNVVF…PKEKTALVSK (88 aa). The chain crosses the membrane as a helical span at residues 480–500; it reads FVSFIAGSFAAVLGIASLIDP. The Lumenal segment spans residues 501 to 512; that stretch reads ELFLMFEISANR. Residues 513–533 form a helical membrane-spanning segment; the sequence is TVLFYIGVFGSILAVSRSLIP. The Cytoplasmic segment spans residues 534-579; that stretch reads EETLVFDPEISLRYVAEFTHYLPPEWEGKLHTEQVKNEFSLMYEMR. The stretch at 580-600 is an intramembrane region; it reads LIILLKELASIFLAPFILYYS. At 601–788 the chain is on the cytoplasmic side; that stretch reads LTQSCDDIVD…KKTDNMNLGA (188 aa). The interval 715 to 736 is disordered; sequence LSPAAPTATTATSGTATGAAPR. The segment covering 716–734 has biased composition (low complexity); the sequence is SPAAPTATTATSGTATGAA.

It belongs to the ATG9 family. In terms of assembly, homotrimer; forms a homotrimer with a central pore that forms a path between the two membrane leaflets. In terms of processing, phosphorylated by ATG1. ATG1 phosphorylation is required for preautophagosome elongation.

It is found in the preautophagosomal structure membrane. The protein localises to the cytoplasmic vesicle membrane. The protein resides in the golgi apparatus membrane. It localises to the endoplasmic reticulum membrane. It catalyses the reaction a 1,2-diacyl-sn-glycero-3-phosphocholine(in) = a 1,2-diacyl-sn-glycero-3-phosphocholine(out). The enzyme catalyses a 1,2-diacyl-sn-glycero-3-phospho-L-serine(in) = a 1,2-diacyl-sn-glycero-3-phospho-L-serine(out). The catalysed reaction is a 1,2-diacyl-sn-glycero-3-phosphoethanolamine(in) = a 1,2-diacyl-sn-glycero-3-phosphoethanolamine(out). It carries out the reaction a 1,2-diacyl-sn-glycero-3-phospho-(1D-myo-inositol-3-phosphate)(in) = a 1,2-diacyl-sn-glycero-3-phospho-(1D-myo-inositol-3-phosphate)(out). Phospholipid scramblase involved in autophagy and cytoplasm to vacuole transport (Cvt) vesicle formation. Cycles between the preautophagosomal structure/phagophore assembly site (PAS) and the cytoplasmic vesicle pool and supplies membrane for the growing autophagosome. Lipid scramblase activity plays a key role in preautophagosomal structure/phagophore assembly by distributing the phospholipids that arrive through ATG2 from the cytoplasmic to the luminal leaflet of the bilayer, thereby driving autophagosomal membrane expansion. Required for mitophagy. Also involved in endoplasmic reticulum-specific autophagic process and is essential for the survival of cells subjected to severe ER stress. Different machineries are required for anterograde trafficking to the PAS during either the Cvt pathway or bulk autophagy and for retrograde trafficking. The sequence is that of Autophagy-related protein 9 from Yarrowia lipolytica (strain CLIB 122 / E 150) (Yeast).